The primary structure comprises 381 residues: MSKQKVVVGMSGGVDSSVTAWLLKEQGYDVVGLFMKNWEDDDDSEYCSTRQDWIDVVSVADLIGIDVEAVNFAAEYKDRVFAEFLREYSAGRTPNPDVLCNAEIKFKAFLDHAMSLGAQTIATGHYARVRENNGRFELLKALDHTKDQSYFLHRLNQAQLSKTLFPLGEIPKTRVREIAEQIALPNAKKKDSTGICFIGERPFRDFLNRYLPTKPGPMKTTEGKVVGEHIGLAFYTFGQRKGIGLGGSKDGSGEPWFVAGKDIPSNTLYVAQGHDHPWLLSHTLSAGNTSWVAGEPPADGFACGAKTRYRQADAPCTFSSAGAGEGLFELNFDVAQWAVTPGQSAVLYDGDVCLGGGIIEHAVTGQPATRQPQKAALLTAR.

ATP-binding positions include 9–16 (GMSGGVDS) and methionine 35. The interval 95–97 (NPD) is interaction with target base in tRNA. Cysteine 100 acts as the Nucleophile in catalysis. Cysteine 100 and cysteine 196 are joined by a disulfide. Glycine 124 serves as a coordination point for ATP. The segment at 146-148 (KDQ) is interaction with tRNA. The active-site Cysteine persulfide intermediate is the cysteine 196. Residues 308-309 (RY) form an interaction with tRNA region.

The protein belongs to the MnmA/TRMU family.

It is found in the cytoplasm. It catalyses the reaction S-sulfanyl-L-cysteinyl-[protein] + uridine(34) in tRNA + AH2 + ATP = 2-thiouridine(34) in tRNA + L-cysteinyl-[protein] + A + AMP + diphosphate + H(+). Catalyzes the 2-thiolation of uridine at the wobble position (U34) of tRNA, leading to the formation of s(2)U34. This chain is tRNA-specific 2-thiouridylase MnmA, found in Paraburkholderia xenovorans (strain LB400).